An 88-amino-acid chain; its full sequence is Small ribosomal subunit protein bS20 (88 aa).

This sequence belongs to the bacterial ribosomal protein bS20 family.

Its function is as follows. Binds directly to 16S ribosomal RNA. The sequence is that of Small ribosomal subunit protein bS20 from Clostridium botulinum (strain ATCC 19397 / Type A).